The primary structure comprises 348 residues: Protein RecA (348 aa).

Position 66–73 (Gly-66–Thr-73) interacts with ATP.

It belongs to the RecA family.

The protein localises to the cytoplasm. In terms of biological role, can catalyze the hydrolysis of ATP in the presence of single-stranded DNA, the ATP-dependent uptake of single-stranded DNA by duplex DNA, and the ATP-dependent hybridization of homologous single-stranded DNAs. It interacts with LexA causing its activation and leading to its autocatalytic cleavage. The chain is Protein RecA from Neisseria meningitidis serogroup C / serotype 2a (strain ATCC 700532 / DSM 15464 / FAM18).